A 98-amino-acid chain; its full sequence is MSLVHINVLIAFTVSLTGLLMYRSHLMSALLCLEGMVLSLFILAALTILNTHFTLANMMPIILLVFAACEAAIGLALLVMVSNTYGTDYVQNLNLLQC.

3 helical membrane passes run 1–21, 29–49, and 61–81; these read MSLV…GLLM, ALLC…LTIL, and IILL…LVMV.

The protein belongs to the complex I subunit 4L family. In terms of assembly, core subunit of respiratory chain NADH dehydrogenase (Complex I) which is composed of 45 different subunits.

It localises to the mitochondrion inner membrane. The catalysed reaction is a ubiquinone + NADH + 5 H(+)(in) = a ubiquinol + NAD(+) + 4 H(+)(out). Its function is as follows. Core subunit of the mitochondrial membrane respiratory chain NADH dehydrogenase (Complex I) which catalyzes electron transfer from NADH through the respiratory chain, using ubiquinone as an electron acceptor. Part of the enzyme membrane arm which is embedded in the lipid bilayer and involved in proton translocation. This chain is NADH-ubiquinone oxidoreductase chain 4L (MT-ND4L), found in Lagenorhynchus albirostris (White-beaked dolphin).